Consider the following 325-residue polypeptide: MADKQRKKVILVGDGAVGSSYAFALVNQGIAQELGIVDLFKEKTQGDAEDLSHALAFTSPKKIYSADYSDASDADLVVLTSGAPQKPGETRLDLVEKNLRITKDVVTKIVASGFKGIFLVAANPVDILTYATWKFSGFPKNRVVGSGTSLDTARFRQALAEKVDVDARSIHAYIMGEHGDSEFAVWSHANVAGVKLEQWFQENDYLNEAEIVELFESVRDAAYSIIAKKGATFYGVAVALARITKAILDDEHAVLPVSVFQDGQYGVSDCYLGQPAVVGAEGVVNPIHIPLNDAEMQKMEASGAQLKAIIDEAFAKEEFASAVKN.

NAD(+) is bound by residues Val17, Asp38, Lys43, Tyr68, and 82–83 (GA). Substrate is bound by residues Gln85, Arg91, and 123–126 (NPVD). NAD(+) contacts are provided by residues 121–123 (AAN) and Ser146. A substrate-binding site is contributed by 151-154 (DTAR). Arg156 and His171 together coordinate beta-D-fructose 1,6-bisphosphate. The Proton acceptor role is filled by His178. Tyr223 is modified (phosphotyrosine). Thr232 is a binding site for substrate.

This sequence belongs to the LDH/MDH superfamily. LDH family. Homotetramer.

The protein resides in the cytoplasm. It carries out the reaction (S)-lactate + NAD(+) = pyruvate + NADH + H(+). The protein operates within fermentation; pyruvate fermentation to lactate; (S)-lactate from pyruvate: step 1/1. Its activity is regulated as follows. Allosterically activated by fructose 1,6-bisphosphate (FBP). Functionally, catalyzes the conversion of lactate to pyruvate. This chain is L-lactate dehydrogenase 1, found in Lactococcus lactis subsp. lactis (strain IL1403) (Streptococcus lactis).